The chain runs to 736 residues: 3',5'-cyclic-AMP phosphodiesterase 4B (736 aa).

Disordered regions lie at residues 51–77 and 96–116; these read QLPP…PTTL and DVEN…SSSS. S56 carries the post-translational modification Phosphoserine. S290 is modified (phosphoserine). The 330-residue stretch at 330–659 folds into the PDEase domain; the sequence is VNTENEDHLA…NWYQSMIPQS (330 aa). The active-site Proton donor is H406. H406 contributes to the 3',5'-cyclic AMP binding site. Positions 406 and 410 each coordinate AMP. Zn(2+)-binding residues include H410, H446, D447, and D564. Residues D447, D564, Q615, and F618 each contribute to the AMP site. D447 is a Mg(2+) binding site. Residue D447 participates in Mn(2+) binding. Q615 and F618 together coordinate 3',5'-cyclic AMP. S659 and S661 each carry phosphoserine. Positions 685 to 736 are disordered; it reads EEEDSEGPEKEGEGPNYFSSTKTLCVIDPENRDSLEETDIDIATEDKSLIDT.

The protein belongs to the cyclic nucleotide phosphodiesterase family. PDE4 subfamily. As to quaternary structure, interacts with DISC1. It depends on Zn(2+) as a cofactor. Requires Mg(2+) as cofactor. Mn(2+) is required as a cofactor. As to expression, widely expressed. Expressed in brain, heart, lung and liver. In terms of tissue distribution, expressed in liver and brain.

It is found in the cytoplasm. It localises to the cell membrane. The catalysed reaction is 3',5'-cyclic AMP + H2O = AMP + H(+). Its pathway is purine metabolism; 3',5'-cyclic AMP degradation; AMP from 3',5'-cyclic AMP: step 1/1. With respect to regulation, inhibited by rolipram. Hydrolyzes the second messenger cAMP, which is a key regulator of many important physiological processes. The sequence is that of 3',5'-cyclic-AMP phosphodiesterase 4B from Rattus norvegicus (Rat).